The following is a 402-amino-acid chain: Multidrug resistance protein MdtH (402 aa).

Topologically, residues 1 to 12 are cytoplasmic; it reads MSRVSQARNLGK. The chain crosses the membrane as a helical span at residues 13-33; the sequence is YFLLIDNMLVVLGFFVVFPLI. Over 34–98 the chain is Periplasmic; that stretch reads SIRFVDQMGW…GFATMGIAHE (65 aa). Residues 99 to 116 form a helical membrane-spanning segment; that stretch reads PWLLWFSCFLSGLGGTLF. Topologically, residues 117-138 are cytoplasmic; the sequence is DPPRSALVVKLIRPEQRGRFFS. Residues 139–159 traverse the membrane as a helical segment; that stretch reads LLMMQDSAGAVIGALLGSWLL. Topologically, residues 160-164 are periplasmic; that stretch reads QYDFR. The helical transmembrane segment at 165–185 threads the bilayer; that stretch reads LVCATGAILFILCALFNAWLL. Residues 186–213 lie on the Cytoplasmic side of the membrane; it reads PAWKLSTARTPVREGMRRVMSNKRFVTY. A helical membrane pass occupies residues 214–234; it reads VLTLAGYYMLAVQVMLMLPIM. The Periplasmic segment spans residues 235–243; the sequence is VNDIAGSPA. The helical transmembrane segment at 244–264 threads the bilayer; that stretch reads AVKWMYAIEACLSLTLLYPIA. Over 265–276 the chain is Cytoplasmic; the sequence is RWSEKRFRLEHR. The chain crosses the membrane as a helical span at residues 277 to 297; it reads LMAGLLVMSLSMLPIGMVGNL. The Periplasmic portion of the chain corresponds to 298 to 299; the sequence is QQ. Residues 300-320 traverse the membrane as a helical segment; sequence LFTLICAFYIGSVIAEPARET. Residues 321–339 lie on the Cytoplasmic side of the membrane; that stretch reads LSASPADARARGSYMGFSR. A helical transmembrane segment spans residues 340-360; sequence LGLAIGGAISYIGGGWLFDMG. The Periplasmic portion of the chain corresponds to 361 to 367; the sequence is KALAQPE. The helical transmembrane segment at 368 to 388 threads the bilayer; the sequence is LPWMMLGIIGFITFLALGWQF. The Cytoplasmic segment spans residues 389–402; that stretch reads SHKRTPRRMLEPGA.

Belongs to the major facilitator superfamily. DHA1 family. MdtH (TC 2.A.1.2.21) subfamily.

The protein localises to the cell inner membrane. The protein is Multidrug resistance protein MdtH of Salmonella typhi.